A 299-amino-acid chain; its full sequence is GTPase Era (299 aa).

The 168-residue stretch at 5 to 172 (RSGFISIIGR…KDLIFAKLPE (168 aa)) folds into the Era-type G domain. The G1 stretch occupies residues 13–20 (GRPNVGKS). 13–20 (GRPNVGKS) is a binding site for GTP. A G2 region spans residues 39–43 (QTTRN). The tract at residues 60 to 63 (DTPG) is G3. Residues 60 to 64 (DTPGI) and 122 to 125 (NKMD) each bind GTP. A G4 region spans residues 122–125 (NKMD). A G5 region spans residues 151-153 (VSA). Residues 203–280 (TREEIPHSVA…YLELWVKVKK (78 aa)) enclose the KH type-2 domain.

The protein belongs to the TRAFAC class TrmE-Era-EngA-EngB-Septin-like GTPase superfamily. Era GTPase family. Monomer.

The protein localises to the cytoplasm. The protein resides in the cell membrane. Its function is as follows. An essential GTPase that binds both GDP and GTP, with rapid nucleotide exchange. Plays a role in 16S rRNA processing and 30S ribosomal subunit biogenesis and possibly also in cell cycle regulation and energy metabolism. This chain is GTPase Era, found in Heliobacterium modesticaldum (strain ATCC 51547 / Ice1).